The following is a 67-amino-acid chain: Large ribosomal subunit protein bL35 (67 aa).

It belongs to the bacterial ribosomal protein bL35 family.

This Allorhizobium ampelinum (strain ATCC BAA-846 / DSM 112012 / S4) (Agrobacterium vitis (strain S4)) protein is Large ribosomal subunit protein bL35.